Reading from the N-terminus, the 248-residue chain is Adenosylcobinamide-GDP ribazoletransferase (248 aa).

7 helical membrane passes run glutamate 24–tryptophan 44, isoleucine 70–serine 90, valine 106–leucine 126, isoleucine 134–alanine 154, isoleucine 168–leucine 188, glycine 189–isoleucine 209, and alanine 228–isoleucine 248.

Belongs to the CobS family. Mg(2+) serves as cofactor.

The protein resides in the cell membrane. It catalyses the reaction alpha-ribazole + adenosylcob(III)inamide-GDP = adenosylcob(III)alamin + GMP + H(+). It carries out the reaction alpha-ribazole 5'-phosphate + adenosylcob(III)inamide-GDP = adenosylcob(III)alamin 5'-phosphate + GMP + H(+). Its pathway is cofactor biosynthesis; adenosylcobalamin biosynthesis; adenosylcobalamin from cob(II)yrinate a,c-diamide: step 7/7. Its function is as follows. Joins adenosylcobinamide-GDP and alpha-ribazole to generate adenosylcobalamin (Ado-cobalamin). Also synthesizes adenosylcobalamin 5'-phosphate from adenosylcobinamide-GDP and alpha-ribazole 5'-phosphate. The chain is Adenosylcobinamide-GDP ribazoletransferase from Listeria monocytogenes serotype 4a (strain HCC23).